Here is a 488-residue protein sequence, read N- to C-terminus: Sucrose 6(F)-phosphate phosphorylase (488 aa).

Residues Asp-49, His-87, 195–197 (RLD), Glu-238, 295–296 (HD), 342–345 (DVHQ), and Arg-399 contribute to the sucrose 6(F)-phosphate site. The active-site Nucleophile is the Asp-197. Glu-238 acts as the Proton donor/acceptor in catalysis.

It belongs to the glycosyl hydrolase 13 family. Sucrose phosphorylase subfamily. In terms of assembly, monomer.

The enzyme catalyses sucrose 6(F)-phosphate + phosphate = beta-D-fructose 6-phosphate + alpha-D-glucose 1-phosphate. Functionally, catalyzes the reversible phosphorolysis of sucrose 6(F)-phosphate into alpha-D-glucose 1-phosphate (Glc1P) and D-fructose 6-phosphate. May be involved in a new pathway for the degradation of sucrose, which could become phosphorylated on its fructose moiety during uptake via a PTS system. To a lesser extent, can also reversibly act on sucrose in vitro. Is also able to catalyze transglycosylation reactions in vitro. In Thermoanaerobacterium thermosaccharolyticum (strain ATCC 7956 / DSM 571 / NCIMB 9385 / NCA 3814 / NCTC 13789 / WDCM 00135 / 2032) (Clostridium thermosaccharolyticum), this protein is Sucrose 6(F)-phosphate phosphorylase.